A 461-amino-acid chain; its full sequence is Cysteine--tRNA ligase (461 aa).

Residue cysteine 28 coordinates Zn(2+). The 'HIGH' region signature appears at isoleucine 30–histidine 40. Zn(2+) contacts are provided by cysteine 209, histidine 234, and glutamate 238. A 'KMSKS' region motif is present at residues lysine 266 to serine 270. Lysine 269 contacts ATP.

It belongs to the class-I aminoacyl-tRNA synthetase family. As to quaternary structure, monomer. Zn(2+) is required as a cofactor.

It localises to the cytoplasm. The enzyme catalyses tRNA(Cys) + L-cysteine + ATP = L-cysteinyl-tRNA(Cys) + AMP + diphosphate. This chain is Cysteine--tRNA ligase, found in Salmonella arizonae (strain ATCC BAA-731 / CDC346-86 / RSK2980).